Reading from the N-terminus, the 341-residue chain is Spindolin (341 aa).

The signal sequence occupies residues 1–20 (MNKLILISLIASLYQVEVDA).

As to quaternary structure, homodimer; disulfide-linked.

Functionally, this protein is a spindle body protein. This chain is Spindolin (SPH), found in Choristoneura biennis entomopoxvirus (CbEPV).